The primary structure comprises 347 residues: UDP-N-acetylglucosamine--N-acetylmuramyl-(pentapeptide) pyrophosphoryl-undecaprenol N-acetylglucosamine transferase (347 aa).

UDP-N-acetyl-alpha-D-glucosamine is bound by residues 11-13 (TGG), N122, R163, S189, and Q279.

It belongs to the glycosyltransferase 28 family. MurG subfamily.

Its subcellular location is the cell inner membrane. It carries out the reaction di-trans,octa-cis-undecaprenyl diphospho-N-acetyl-alpha-D-muramoyl-L-alanyl-D-glutamyl-meso-2,6-diaminopimeloyl-D-alanyl-D-alanine + UDP-N-acetyl-alpha-D-glucosamine = di-trans,octa-cis-undecaprenyl diphospho-[N-acetyl-alpha-D-glucosaminyl-(1-&gt;4)]-N-acetyl-alpha-D-muramoyl-L-alanyl-D-glutamyl-meso-2,6-diaminopimeloyl-D-alanyl-D-alanine + UDP + H(+). Its pathway is cell wall biogenesis; peptidoglycan biosynthesis. Cell wall formation. Catalyzes the transfer of a GlcNAc subunit on undecaprenyl-pyrophosphoryl-MurNAc-pentapeptide (lipid intermediate I) to form undecaprenyl-pyrophosphoryl-MurNAc-(pentapeptide)GlcNAc (lipid intermediate II). This Sulfurihydrogenibium sp. (strain YO3AOP1) protein is UDP-N-acetylglucosamine--N-acetylmuramyl-(pentapeptide) pyrophosphoryl-undecaprenol N-acetylglucosamine transferase.